The following is a 264-amino-acid chain: ATP synthase subunit b 1 (264 aa).

The chain crosses the membrane as a helical span at residues 2-22; it reads LFDWFTFWAQLLNFLILVWLL. The segment at 240-264 is disordered; sequence ASSALLDGPDDEMNEEEGHAGKDAD. Residues 255–264 are compositionally biased toward basic and acidic residues; it reads EEGHAGKDAD.

It belongs to the ATPase B chain family. In terms of assembly, F-type ATPases have 2 components, F(1) - the catalytic core - and F(0) - the membrane proton channel. F(1) has five subunits: alpha(3), beta(3), gamma(1), delta(1), epsilon(1). F(0) has four main subunits: a(1), b(2) and c(10-14). The alpha and beta chains form an alternating ring which encloses part of the gamma chain. F(1) is attached to F(0) by a central stalk formed by the gamma and epsilon chains, while a peripheral stalk is formed by the delta and b chains.

The protein resides in the cell inner membrane. Its function is as follows. F(1)F(0) ATP synthase produces ATP from ADP in the presence of a proton or sodium gradient. F-type ATPases consist of two structural domains, F(1) containing the extramembraneous catalytic core and F(0) containing the membrane proton channel, linked together by a central stalk and a peripheral stalk. During catalysis, ATP synthesis in the catalytic domain of F(1) is coupled via a rotary mechanism of the central stalk subunits to proton translocation. In terms of biological role, component of the F(0) channel, it forms part of the peripheral stalk, linking F(1) to F(0). The chain is ATP synthase subunit b 1 from Chlorobium luteolum (strain DSM 273 / BCRC 81028 / 2530) (Pelodictyon luteolum).